Here is a 479-residue protein sequence, read N- to C-terminus: Adenosylhomocysteinase (479 aa).

Substrate-binding residues include threonine 56, aspartate 133, and glutamate 199. Residue 200–202 (TTT) participates in NAD(+) binding. Positions 229 and 233 each coordinate substrate. Residues asparagine 234, 263 to 268 (GYGDVG), glutamate 286, asparagine 321, 342 to 344 (IGH), and asparagine 390 contribute to the NAD(+) site.

The protein belongs to the adenosylhomocysteinase family. In terms of assembly, homotetramer. The cofactor is NAD(+).

It carries out the reaction S-adenosyl-L-homocysteine + H2O = L-homocysteine + adenosine. The protein operates within amino-acid biosynthesis; L-homocysteine biosynthesis; L-homocysteine from S-adenosyl-L-homocysteine: step 1/1. In terms of biological role, adenosylhomocysteine is a competitive inhibitor of S-adenosyl-L-methionine-dependent methyl transferase reactions; therefore adenosylhomocysteinase may play a key role in the control of methylations via regulation of the intracellular concentration of adenosylhomocysteine. The protein is Adenosylhomocysteinase of Plasmodium chabaudi chabaudi.